Reading from the N-terminus, the 137-residue chain is Large ribosomal subunit protein uL16 (137 aa).

The protein belongs to the universal ribosomal protein uL16 family. As to quaternary structure, part of the 50S ribosomal subunit.

Functionally, binds 23S rRNA and is also seen to make contacts with the A and possibly P site tRNAs. The chain is Large ribosomal subunit protein uL16 from Acinetobacter baumannii (strain AB307-0294).